Consider the following 251-residue polypeptide: uncharacterized protein (251 aa).

An N-terminal signal peptide occupies residues 1–18; the sequence is MRILIILSIILCSLSIRA.

The protein belongs to the MlaA family.

This is an uncharacterized protein from Rickettsia conorii (strain ATCC VR-613 / Malish 7).